A 748-amino-acid polypeptide reads, in one-letter code: Peroxisomal membrane protein PEX14 (748 aa).

2 disordered regions span residues 1 to 138 (MDND…LSPS) and 190 to 228 (GNIN…NNNN). Over 1 to 277 (MDNDDINNNN…IAQLMMNNNR (277 aa)) the chain is Peroxisomal. Low complexity predominate over residues 7-30 (NNNNNNNNNNNNNNNSQELDQQEQ). The stretch at 8–60 (NNNNNNNNNNNNNNSQELDQQEQTQEEITKQRIQKRKEEAKRIMEERKKREQQ) forms a coiled coil. Positions 43–59 (RKEEAKRIMEERKKREQ) are enriched in basic and acidic residues. A compositionally biased stretch (polar residues) spans 86–104 (PQRQQQYDDNDEPPQQQQY). 3 stretches are compositionally biased toward low complexity: residues 122-131 (TTSSTASAAT), 190-209 (GNIN…NSIS), and 218-228 (NNNNNSSNNNN). A coiled-coil region spans residues 241–277 (QQHQQQQQMALTQIQSYQKRLEADDQRIAQLMMNNNR). Residues 278 to 300 (FSWNSFLFSVTAIVGAASGLAYL) form a helical membrane-spanning segment. Residues 301–748 (TSNYIIPFLN…INNTDSSVEK (448 aa)) lie on the Cytoplasmic side of the membrane. Residues 316-413 (KDASANMDKK…IGNKENSNNS (98 aa)) adopt a coiled-coil conformation. Disordered regions lie at residues 406 to 673 (NKEN…ETPY) and 685 to 748 (KQGK…SVEK). 2 stretches are compositionally biased toward low complexity: residues 409 to 424 (NSNN…NNNN) and 445 to 476 (STNN…PGSN). Polar residues predominate over residues 510 to 527 (SWQQKSSNPPSDLSNAND). Composition is skewed to low complexity over residues 528 to 542 (KSSP…PTKP) and 569 to 611 (TTTT…NNNN). Polar residues predominate over residues 612–627 (TTIASTSNESNNSKVE). Residues 628-661 (TTSNDSDKSTSPSSSSNNTTSTTATTTTITSAST) are compositionally biased toward low complexity. Over residues 710 to 723 (SAKERPKKPWERDT) the composition is skewed to basic and acidic residues. The span at 724–748 (LTSVTNNLSVEETQTINNTDSSVEK) shows a compositional bias: polar residues.

This sequence belongs to the peroxin-14 family. In terms of assembly, interacts with PEX13; forming the PEX13-PEX14 docking complex. Interacts with PEX5 (via WxxxF/Y motifs).

The protein resides in the peroxisome membrane. Functionally, component of the PEX13-PEX14 docking complex, a translocon channel that specifically mediates the import of peroxisomal cargo proteins bound to PEX5 receptor. The PEX13-PEX14 docking complex forms a large import pore which can be opened to a diameter of about 9 nm. Mechanistically, PEX5 receptor along with cargo proteins associates with the PEX14 subunit of the PEX13-PEX14 docking complex in the cytosol, leading to the insertion of the receptor into the organelle membrane with the concomitant translocation of the cargo into the peroxisome matrix. In Dictyostelium discoideum (Social amoeba), this protein is Peroxisomal membrane protein PEX14 (pex14).